We begin with the raw amino-acid sequence, 233 residues long: Probable GTP-binding protein EngB (233 aa).

One can recognise an EngB-type G domain in the interval 21 to 228 (GLPEVALVGR…WRWIREHVQD (208 aa)). Residues 29 to 36 (GRSNVGKS) and 56 to 60 (GRTQA) each bind GTP. Mg(2+)-binding residues include Ser36 and Thr58. Residues 68 to 87 (PQGKPRPEGEPQPDKDAGRT) form a disordered region. Residues 72 to 85 (PRPEGEPQPDKDAG) show a composition bias toward basic and acidic residues. GTP is bound by residues 107–110 (DMPG), 174–177 (TKAD), and 207–209 (FSA).

Belongs to the TRAFAC class TrmE-Era-EngA-EngB-Septin-like GTPase superfamily. EngB GTPase family. The cofactor is Mg(2+).

In terms of biological role, necessary for normal cell division and for the maintenance of normal septation. The sequence is that of Probable GTP-binding protein EngB from Symbiobacterium thermophilum (strain DSM 24528 / JCM 14929 / IAM 14863 / T).